A 490-amino-acid chain; its full sequence is Thiamine biosynthesis bifunctional protein ThiED (490 aa).

The segment at 1-213 is thiamine-phosphate synthase; sequence MASNGHTLRL…PDPALAATEI (213 aa). 4-amino-2-methyl-5-(diphosphooxymethyl)pyrimidine contacts are provided by residues 50–54 and asparagine 82; that span reads QYRNK. Residues aspartate 83 and aspartate 102 each contribute to the Mg(2+) site. Residue serine 121 participates in 4-amino-2-methyl-5-(diphosphooxymethyl)pyrimidine binding. Position 147-149 (147-149) interacts with 2-[(2R,5Z)-2-carboxy-4-methylthiazol-5(2H)-ylidene]ethyl phosphate; the sequence is SRS. Lysine 150 contacts 4-amino-2-methyl-5-(diphosphooxymethyl)pyrimidine. Residues glycine 177 and 197–198 each bind 2-[(2R,5Z)-2-carboxy-4-methylthiazol-5(2H)-ylidene]ethyl phosphate; that span reads IS. The segment at 229–490 is hydroxymethylpyrimidine/phosphomethylpyrimidine kinase; the sequence is LTVAGSDSGG…ILAAEDVRDR (262 aa). Residue glutamine 266 participates in 4-amino-5-hydroxymethyl-2-methylpyrimidine binding.

In the N-terminal section; belongs to the thiamine-phosphate synthase family. This sequence in the C-terminal section; belongs to the ThiD family. Requires Mg(2+) as cofactor.

It carries out the reaction 2-[(2R,5Z)-2-carboxy-4-methylthiazol-5(2H)-ylidene]ethyl phosphate + 4-amino-2-methyl-5-(diphosphooxymethyl)pyrimidine + 2 H(+) = thiamine phosphate + CO2 + diphosphate. The catalysed reaction is 2-(2-carboxy-4-methylthiazol-5-yl)ethyl phosphate + 4-amino-2-methyl-5-(diphosphooxymethyl)pyrimidine + 2 H(+) = thiamine phosphate + CO2 + diphosphate. The enzyme catalyses 4-methyl-5-(2-phosphooxyethyl)-thiazole + 4-amino-2-methyl-5-(diphosphooxymethyl)pyrimidine + H(+) = thiamine phosphate + diphosphate. It catalyses the reaction 4-amino-5-hydroxymethyl-2-methylpyrimidine + ATP = 4-amino-2-methyl-5-(phosphooxymethyl)pyrimidine + ADP + H(+). It carries out the reaction 4-amino-2-methyl-5-(phosphooxymethyl)pyrimidine + ATP = 4-amino-2-methyl-5-(diphosphooxymethyl)pyrimidine + ADP. The protein operates within cofactor biosynthesis; thiamine diphosphate biosynthesis; 4-amino-2-methyl-5-diphosphomethylpyrimidine from 5-amino-1-(5-phospho-D-ribosyl)imidazole: step 3/3. Its pathway is cofactor biosynthesis; thiamine diphosphate biosynthesis; thiamine phosphate from 4-amino-2-methyl-5-diphosphomethylpyrimidine and 4-methyl-5-(2-phosphoethyl)-thiazole: step 1/1. Its function is as follows. Condenses 4-methyl-5-(beta-hydroxyethyl)thiazole monophosphate (THZ-P) and 2-methyl-4-amino-5-hydroxymethyl pyrimidine pyrophosphate (HMP-PP) to form thiamine monophosphate (TMP). Functionally, catalyzes the phosphorylation of hydroxymethylpyrimidine phosphate (HMP-P) to HMP-PP, and of HMP to HMP-P. In Geobacter sulfurreducens (strain ATCC 51573 / DSM 12127 / PCA), this protein is Thiamine biosynthesis bifunctional protein ThiED (thiDE).